A 457-amino-acid chain; its full sequence is Endo-1,3(4)-beta-glucanase ARB_04519 (457 aa).

The first 18 residues, 1–18 (MRTTGLLLLGALAELGSA), serve as a signal peptide directing secretion. The GH16 domain maps to 19–319 (TYILEDDYQP…YMKVYQQGTA (301 aa)). The Nucleophile role is filled by E130. Residue E135 is the Proton donor of the active site. Residue N200 is glycosylated (N-linked (GlcNAc...) asparagine). The segment at 318-397 (TAPTKPSQAP…DSCPPPTQPA (80 aa)) is disordered. Low complexity predominate over residues 333-352 (TPALPTMKSTSTVSSMVSAT). Residues 353–362 (QPAPTASNPT) are compositionally biased toward polar residues. Residues 368-378 (PSSSSSNNGPQ) are compositionally biased toward low complexity.

This sequence belongs to the glycosyl hydrolase 16 family.

Its subcellular location is the secreted. It catalyses the reaction Endohydrolysis of (1-&gt;3)- or (1-&gt;4)-linkages in beta-D-glucans when the glucose residue whose reducing group is involved in the linkage to be hydrolyzed is itself substituted at C-3.. Its function is as follows. Mixed-linked glucanase involved in the degradation of complex natural cellulosic substrates. Active on laminarin. lichenan, soluble carboxymethyl cellulose but not on pustulan. This is Endo-1,3(4)-beta-glucanase ARB_04519 from Arthroderma benhamiae (strain ATCC MYA-4681 / CBS 112371) (Trichophyton mentagrophytes).